A 122-amino-acid chain; its full sequence is MIQQETRLRVGDNTGAKELLCIRVLGGSYRRYASVGDIIVASVKEATPGGVVKKGDVVKAVVVRTRKPIKRPDGSYIRFSENAAVIINEQKNPKGTRIFGPVARELRDRDFMKIISLAPEVL.

The protein belongs to the universal ribosomal protein uL14 family. As to quaternary structure, part of the 50S ribosomal subunit. Forms a cluster with proteins L3 and L19. In the 70S ribosome, L14 and L19 interact and together make contacts with the 16S rRNA in bridges B5 and B8.

Functionally, binds to 23S rRNA. Forms part of two intersubunit bridges in the 70S ribosome. The chain is Large ribosomal subunit protein uL14 from Heliobacterium modesticaldum (strain ATCC 51547 / Ice1).